The sequence spans 98 residues: MMSISLNLTMAFLLALAGVLIYRSHLMSTLLCLEGMMLSLFILMALLISHFHMFSASMAPLILLVFSACEAGVGLALLVKTSNNYGNDYVQNLNLLQC.

3 helical membrane-spanning segments follow: residues 1–21 (MMSI…GVLI), 28–48 (STLL…ALLI), and 59–79 (APLI…ALLV).

Belongs to the complex I subunit 4L family. Core subunit of respiratory chain NADH dehydrogenase (Complex I) which is composed of 45 different subunits.

The protein localises to the mitochondrion inner membrane. The catalysed reaction is a ubiquinone + NADH + 5 H(+)(in) = a ubiquinol + NAD(+) + 4 H(+)(out). Its function is as follows. Core subunit of the mitochondrial membrane respiratory chain NADH dehydrogenase (Complex I) which catalyzes electron transfer from NADH through the respiratory chain, using ubiquinone as an electron acceptor. Part of the enzyme membrane arm which is embedded in the lipid bilayer and involved in proton translocation. The chain is NADH-ubiquinone oxidoreductase chain 4L (MT-ND4L) from Osphranter robustus (Wallaroo).